Consider the following 480-residue polypeptide: Phenolic acid decarboxylase (480 aa).

The Mn(2+) site is built by Asn163, His185, and Glu227. Residues 163–168 (NVGTYR) and 184–185 (MH) each bind prenylated FMN. Residue Glu278 is the Proton donor of the active site. The interval 443–466 (TTPVPPEPNPRETQLLDPPDGTEE) is disordered.

This sequence belongs to the UbiD family. YclC subfamily. Homohexamer. Prenylated FMN is required as a cofactor. The cofactor is Mn(2+).

The enzyme catalyses 4-hydroxybenzoate + H(+) = phenol + CO2. It catalyses the reaction 3,4-dihydroxybenzoate + H(+) = catechol + CO2. Its activity is regulated as follows. Inhibited by Zn(2+), (2,3,4)-trihydroxybenzoate and (3,4,5)-trihydroxybenzoate. Ammonium and rubidium ions decrease the activity of the carboxylation of 3,4-dihydroxybenzoate by about 20%. Its function is as follows. Involved in the non-oxidative decarboxylation and detoxification of phenolic derivatives under anaerobic conditions. Oxygen-sensitive phenolic acid decarboxylase that catalyzes the reversible decarboxylation of 4-hydroxybenzoate and 3,4-dihydroxybenzoate. The protein is Phenolic acid decarboxylase of Sedimentibacter hydroxybenzoicus (Clostridium hydroxybenzoicum).